The following is a 195-amino-acid chain: dITP/XTP pyrophosphatase (195 aa).

8–13 (SNNQGK) contacts substrate. Residues glutamate 39 and aspartate 68 each coordinate Mg(2+). Aspartate 68 (proton acceptor) is an active-site residue. Residues serine 69, 149 to 152 (FGYD), lysine 172, and 177 to 178 (HR) each bind substrate.

This sequence belongs to the HAM1 NTPase family. In terms of assembly, homodimer. Mg(2+) is required as a cofactor.

The enzyme catalyses XTP + H2O = XMP + diphosphate + H(+). It catalyses the reaction dITP + H2O = dIMP + diphosphate + H(+). It carries out the reaction ITP + H2O = IMP + diphosphate + H(+). Pyrophosphatase that catalyzes the hydrolysis of nucleoside triphosphates to their monophosphate derivatives, with a high preference for the non-canonical purine nucleotides XTP (xanthosine triphosphate), dITP (deoxyinosine triphosphate) and ITP. Seems to function as a house-cleaning enzyme that removes non-canonical purine nucleotides from the nucleotide pool, thus preventing their incorporation into DNA/RNA and avoiding chromosomal lesions. This is dITP/XTP pyrophosphatase from Staphylococcus aureus (strain Mu50 / ATCC 700699).